We begin with the raw amino-acid sequence, 66 residues long: MAVPKRRKSKSKVRTKRAHHAIGKPNLVPCPNCNSYRLPHRICPTCGFYKTGIVLEPKVKKPKEEN.

Belongs to the bacterial ribosomal protein bL32 family.

In Leptospira interrogans serogroup Icterohaemorrhagiae serovar copenhageni (strain Fiocruz L1-130), this protein is Large ribosomal subunit protein bL32.